A 633-amino-acid chain; its full sequence is Shootin-1 (633 aa).

Residue Met-1 is modified to N-acetylmethionine. Phosphoserine is present on residues Ser-3 and Ser-4. The stretch at 7 to 353 forms a coiled coil; that stretch reads EKQLQLITSL…RVNQSENSVP (347 aa). Residues Ser-101 and Ser-249 each carry the phosphoserine; by PAK1 modification. Residues 343 to 508 are disordered; the sequence is KRVNQSENSV…LATSESKSMP (166 aa). Pro residues predominate over residues 352 to 369; that stretch reads VPPPPPPPPPLPPPPPNP. Ser-375 is modified (phosphoserine). Positions 403–418 are enriched in basic and acidic residues; that stretch reads TDLKRQAVEEMMDRIK. Residues 456–465 show a composition bias toward polar residues; sequence LNKSTSSRSL. Ser-473 is modified (phosphoserine). Position 487 is a phosphothreonine (Thr-487). A compositionally biased stretch (polar residues) spans 490 to 505; that stretch reads ADSSSPTGILATSESK. Ser-494 carries the phosphoserine modification. Position 496 is a phosphothreonine (Thr-496). Residues Ser-506 and Ser-515 each carry the phosphoserine modification. The disordered stretch occupies residues 525 to 633; it reads TLEAEFNNPC…KTGETDSSNC (109 aa). Phosphothreonine is present on Thr-537. The segment covering 550-559 has biased composition (polar residues); the sequence is CTNSKVTFQP. A compositionally biased stretch (basic and acidic residues) spans 590 to 621; it reads PQTKDQAAEKDPTQCKEEERGETQPEFKEDSS.

Belongs to the shootin family. In terms of assembly, interacts with PFN2. Interacts (via N-terminus) with KIF20B; this interaction is direct and promotes the association of SHTN1 to microtubules in primary neurons. Associates with microtubule. Interacts with L1CAM; this interaction occurs in axonal growth cones. Interacts with actin filament retrograde flow; this interaction is enhanced in a netrin-1- and PAK1-dependent manner and promotes F-actin-substrate coupling and concomitant formation of traction forces at axonal growth cones. Interacts with RUFY3. Phosphorylated on Ser-101 and Ser-249 by PAK1 through a CDC42- and RAC1-dependent signaling pathway, which enhances its association with F-actin retrograde flow in filopodia and lamellipodia of axonal growth cones. Phosphorylation on Ser-101 and Ser-249 is increased by netrin-1. Brain-specific (at protein level). Expressed in hippocampal neurons.

It localises to the perikaryon. The protein localises to the cell projection. It is found in the axon. The protein resides in the growth cone. Its subcellular location is the cytoplasm. It localises to the cytoskeleton. The protein localises to the filopodium. It is found in the lamellipodium. Functionally, involved in the generation of internal asymmetric signals required for neuronal polarization and neurite outgrowth. Mediates netrin-1-induced F-actin-substrate coupling or 'clutch engagement' within the axon growth cone through activation of CDC42, RAC1 and PAK1-dependent signaling pathway, thereby converting the F-actin retrograde flow into traction forces, concomitantly with filopodium extension and axon outgrowth. Plays a role in cytoskeletal organization by regulating the subcellular localization of phosphoinositide 3-kinase (PI3K) activity at the axonal growth cone. Also plays a role in regenerative neurite outgrowth. In the developing cortex, cooperates with KIF20B to promote both the transition from the multipolar to the bipolar stage and the radial migration of cortical neurons from the ventricular zone toward the superficial layer of the neocortex. Involved in the accumulation of phosphatidylinositol 3,4,5-trisphosphate (PIP3) in the growth cone of primary hippocampal neurons. This Rattus norvegicus (Rat) protein is Shootin-1.